The sequence spans 834 residues: Arf-GAP with coiled-coil, ANK repeat and PH domain-containing protein 3 (834 aa).

The region spanning 268–363 is the PH domain; the sequence is GVVMEGYLFK…WVQAVQASIA (96 aa). The tract at residues 375 to 400 is disordered; that stretch reads SERLDRTASPSTSSIDSATDTRERGV. Residues 382–392 show a composition bias toward polar residues; sequence ASPSTSSIDSA. The region spanning 403-525 is the Arf-GAP domain; sequence ESVLQRVQSV…KFLRKAPMAP (123 aa). The C4-type zinc-finger motif lies at 418–441; that stretch reads CGDCGQPDPRWASINLGVLLCIEC. Positions 633 to 653 are disordered; it reads SVTEEEGAESEESSGEADGDT. Residues 634 to 653 are compositionally biased toward acidic residues; the sequence is VTEEEGAESEESSGEADGDT. ANK repeat units follow at residues 702–731, 735–764, and 768–797; these read EGKT…DVNQ, RGRA…DQHA, and EQRD…AEEM.

Functionally, GTPase-activating protein for the ADP ribosylation factor family. The chain is Arf-GAP with coiled-coil, ANK repeat and PH domain-containing protein 3 (ACAP3) from Homo sapiens (Human).